The following is a 310-amino-acid chain: Ribonuclease HIII (310 aa).

In terms of domain architecture, RNase H type-2 spans 90-306; that stretch reads FQCIGSDEAG…RKKAENLVQK (217 aa). A divalent metal cation-binding residues include Asp-96, Glu-97, and Asp-201.

It belongs to the RNase HII family. RnhC subfamily. The cofactor is Mn(2+). It depends on Mg(2+) as a cofactor.

It localises to the cytoplasm. It catalyses the reaction Endonucleolytic cleavage to 5'-phosphomonoester.. Functionally, endonuclease that specifically degrades the RNA of RNA-DNA hybrids. The protein is Ribonuclease HIII of Staphylococcus saprophyticus subsp. saprophyticus (strain ATCC 15305 / DSM 20229 / NCIMB 8711 / NCTC 7292 / S-41).